The sequence spans 239 residues: Glandular kallikrein, prostatic (239 aa).

The Peptidase S1 domain maps to 1-236 (VIGGQECARD…YREWIERTMA (236 aa)). Cystine bridges form between C7–C151, C26–C42, C128–C197, C162–C176, and C187–C212. The active-site Charge relay system is the H41. N78 is a glycosylation site (N-linked (GlcNAc...) asparagine). D96 serves as the catalytic Charge relay system. N169 is a glycosylation site (N-linked (GlcNAc...) asparagine). Catalysis depends on S191, which acts as the Charge relay system.

It belongs to the peptidase S1 family. Kallikrein subfamily.

It carries out the reaction Preferential cleavage of Arg-|-Xaa bonds in small molecule substrates. Highly selective action to release kallidin (lysyl-bradykinin) from kininogen involves hydrolysis of Met-|-Xaa or Leu-|-Xaa.. Glandular kallikreins cleave Met-Lys and Arg-Ser bonds in kininogen to release Lys-bradykinin. The protein is Glandular kallikrein, prostatic of Cavia porcellus (Guinea pig).